A 76-amino-acid chain; its full sequence is ATP synthase subunit 9, mitochondrial (76 aa).

2 consecutive transmembrane segments (helical) span residues 14–34 and 52–72; these read IATLGLGGAAIGIALVFVALI and ILGFALSEACGLFCLMISFLL.

This sequence belongs to the ATPase C chain family. As to quaternary structure, F-type ATPases have 2 components, CF(1) - the catalytic core - and CF(0) - the membrane proton channel. CF(1) has five subunits: alpha(3), beta(3), gamma(1), delta(1), epsilon(1). CF(0) has three main subunits: a, b and c.

The protein resides in the mitochondrion membrane. In terms of biological role, mitochondrial membrane ATP synthase (F(1)F(0) ATP synthase or Complex V) produces ATP from ADP in the presence of a proton gradient across the membrane which is generated by electron transport complexes of the respiratory chain. F-type ATPases consist of two structural domains, F(1) - containing the extramembraneous catalytic core and F(0) - containing the membrane proton channel, linked together by a central stalk and a peripheral stalk. During catalysis, ATP synthesis in the catalytic domain of F(1) is coupled via a rotary mechanism of the central stalk subunits to proton translocation. Part of the complex F(0) domain. A homomeric c-ring of probably 10 subunits is part of the complex rotary element. The polypeptide is ATP synthase subunit 9, mitochondrial (ATP9) (Candida albicans (strain SC5314 / ATCC MYA-2876) (Yeast)).